A 307-amino-acid chain; its full sequence is Putative S-adenosyl-L-methionine-dependent methyltransferase Mflv_5023 (307 aa).

S-adenosyl-L-methionine contacts are provided by residues Asp-133 and 162 to 163 (DL). Residues 213-234 (SRLAVESVPSQQSADQDEMREK) form a disordered region.

It belongs to the UPF0677 family.

Exhibits S-adenosyl-L-methionine-dependent methyltransferase activity. This chain is Putative S-adenosyl-L-methionine-dependent methyltransferase Mflv_5023, found in Mycolicibacterium gilvum (strain PYR-GCK) (Mycobacterium gilvum (strain PYR-GCK)).